We begin with the raw amino-acid sequence, 182 residues long: NADH-quinone oxidoreductase subunit I (182 aa).

2 consecutive 4Fe-4S ferredoxin-type domains span residues 52–82 (LTRD…LQKA) and 92–121 (DFFR…LTPD). Residues Cys62, Cys65, Cys68, Cys72, Cys101, Cys104, Cys107, and Cys111 each coordinate [4Fe-4S] cluster.

The protein belongs to the complex I 23 kDa subunit family. NDH-1 is composed of 13 different subunits. Subunits NuoA, H, J, K, L, M, N constitute the membrane sector of the complex. Requires [4Fe-4S] cluster as cofactor.

The protein resides in the cell inner membrane. It catalyses the reaction a quinone + NADH + 5 H(+)(in) = a quinol + NAD(+) + 4 H(+)(out). Functionally, NDH-1 shuttles electrons from NADH, via FMN and iron-sulfur (Fe-S) centers, to quinones in the respiratory chain. The immediate electron acceptor for the enzyme in this species is believed to be ubiquinone. Couples the redox reaction to proton translocation (for every two electrons transferred, four hydrogen ions are translocated across the cytoplasmic membrane), and thus conserves the redox energy in a proton gradient. The polypeptide is NADH-quinone oxidoreductase subunit I (Pseudomonas fluorescens (strain ATCC BAA-477 / NRRL B-23932 / Pf-5)).